The sequence spans 670 residues: Mannosyl-oligosaccharide alpha-1,2-mannosidase IA (670 aa).

Residues Met1 to Lys30 are Cytoplasmic-facing. Residues Tyr31 to Leu51 traverse the membrane as a helical; Signal-anchor for type II membrane protein segment. The Lumenal portion of the chain corresponds to Pro52–Ile670. Residue Asn61 is glycosylated (N-linked (GlcNAc...) asparagine). The interval Asp135 to Ser177 is disordered. An intrachain disulfide couples Cys480 to Cys512. Glu526 serves as the catalytic Proton donor. Residue Thr637 coordinates Ca(2+).

It belongs to the glycosyl hydrolase 47 family. The cofactor is Ca(2+). Post-translationally, N-glycosylated. Contains high mannose-type oligosaccharides.

It localises to the golgi apparatus membrane. The catalysed reaction is N(4)-(alpha-D-Man-(1-&gt;2)-alpha-D-Man-(1-&gt;2)-alpha-D-Man-(1-&gt;3)-[alpha-D-Man-(1-&gt;2)-alpha-D-Man-(1-&gt;3)-[alpha-D-Man-(1-&gt;2)-alpha-D-Man-(1-&gt;6)]-alpha-D-Man-(1-&gt;6)]-beta-D-Man-(1-&gt;4)-beta-D-GlcNAc-(1-&gt;4)-beta-D-GlcNAc)-L-asparaginyl-[protein] (N-glucan mannose isomer 9A1,2,3B1,2,3) + 4 H2O = N(4)-(alpha-D-Man-(1-&gt;3)-[alpha-D-Man-(1-&gt;3)-[alpha-D-Man-(1-&gt;6)]-alpha-D-Man-(1-&gt;6)]-beta-D-Man-(1-&gt;4)-beta-D-GlcNAc-(1-&gt;4)-beta-D-GlcNAc)-L-asparaginyl-[protein] (N-glucan mannose isomer 5A1,2) + 4 beta-D-mannose. It catalyses the reaction N(4)-(alpha-D-Man-(1-&gt;2)-alpha-D-Man-(1-&gt;2)-alpha-D-Man-(1-&gt;3)-[alpha-D-Man-(1-&gt;3)-[alpha-D-Man-(1-&gt;2)-alpha-D-Man-(1-&gt;6)]-alpha-D-Man-(1-&gt;6)]-beta-D-Man-(1-&gt;4)-beta-D-GlcNAc-(1-&gt;4)-beta-D-GlcNAc)-L-asparaginyl-[protein] (N-glucan mannose isomer 8A1,2,3B1,3) + 3 H2O = N(4)-(alpha-D-Man-(1-&gt;3)-[alpha-D-Man-(1-&gt;3)-[alpha-D-Man-(1-&gt;6)]-alpha-D-Man-(1-&gt;6)]-beta-D-Man-(1-&gt;4)-beta-D-GlcNAc-(1-&gt;4)-beta-D-GlcNAc)-L-asparaginyl-[protein] (N-glucan mannose isomer 5A1,2) + 3 beta-D-mannose. Its pathway is protein modification; protein glycosylation. Strongly inhibited by 1-deoxymannojirimycin, an inhibitor of class I alpha-mannosidases, and by EDTA. EDTA inhibition is reversed by the addition of calcium, but not of magnesium. In terms of biological role, involved in the maturation of Asn-linked oligosaccharides. Converts Man(9)GlcNAc(2) to Man(5)GlcNAc(2) primarily through the Man(7)GlcNAc(2) isomer C processing intermediate. The sequence is that of Mannosyl-oligosaccharide alpha-1,2-mannosidase IA from Spodoptera frugiperda (Fall armyworm).